The following is a 488-amino-acid chain: Glutamyl-tRNA(Gln) amidotransferase subunit A (488 aa).

Residues Lys-78 and Ser-153 each act as charge relay system in the active site. Ser-177 acts as the Acyl-ester intermediate in catalysis.

Belongs to the amidase family. GatA subfamily. As to quaternary structure, heterotrimer of A, B and C subunits.

It catalyses the reaction L-glutamyl-tRNA(Gln) + L-glutamine + ATP + H2O = L-glutaminyl-tRNA(Gln) + L-glutamate + ADP + phosphate + H(+). Functionally, allows the formation of correctly charged Gln-tRNA(Gln) through the transamidation of misacylated Glu-tRNA(Gln) in organisms which lack glutaminyl-tRNA synthetase. The reaction takes place in the presence of glutamine and ATP through an activated gamma-phospho-Glu-tRNA(Gln). The polypeptide is Glutamyl-tRNA(Gln) amidotransferase subunit A (Caldanaerobacter subterraneus subsp. tengcongensis (strain DSM 15242 / JCM 11007 / NBRC 100824 / MB4) (Thermoanaerobacter tengcongensis)).